A 104-amino-acid polypeptide reads, in one-letter code: Gastrin (104 aa).

Residues 1 to 21 (MQRLCVYVLILALALATFSEA) form the signal peptide. The propeptide occupies 22–58 (SWKPRSRLQDAPSGPGANRGLEPHGLDQLGPASHHRR). Positions 22 to 70 (SWKPRSRLQDAPSGPGANRGLEPHGLDQLGPASHHRRQLGLQGPPQLVA) are disordered. Glutamine 59 and glutamine 76 each carry pyrrolidone carboxylic acid. The residue at position 87 (tyrosine 87) is a Sulfotyrosine. At phenylalanine 92 the chain carries Phenylalanine amide. Position 96 is a phosphoserine (serine 96). Residues 96 to 104 (SAEEGDQRP) constitute a propeptide that is removed on maturation.

It belongs to the gastrin/cholecystokinin family.

It localises to the secreted. Functionally, gastrin stimulates the stomach mucosa to produce and secrete hydrochloric acid and the pancreas to secrete its digestive enzymes. It also stimulates smooth muscle contraction and increases blood circulation and water secretion in the stomach and intestine. The polypeptide is Gastrin (GAST) (Canis lupus familiaris (Dog)).